Reading from the N-terminus, the 105-residue chain is Putative membrane protein insertion efficiency factor (105 aa).

Belongs to the UPF0161 family.

It localises to the cell membrane. In terms of biological role, could be involved in insertion of integral membrane proteins into the membrane. The chain is Putative membrane protein insertion efficiency factor from Bifidobacterium longum (strain NCC 2705).